A 121-amino-acid polypeptide reads, in one-letter code: Splicing factor 3B subunit 6 (121 aa).

Residues 12 to 25 (EVNRLLYVRNLPYK) are interaction with pre-mRNA branch site. Residues 15-90 (RLLYVRNLPY…RYLVVLYYQS (76 aa)) form the RRM domain.

It belongs to the SF3B6 family. In terms of assembly, component of splicing factor SF3B complex. Component of the U11/U12 snRNPs that are part of the U12-type spliceosome.

Its subcellular location is the nucleus. Functionally, involved in pre-mRNA splicing as a component of the splicing factor SF3B complex. SF3B complex is required for 'A' complex assembly formed by the stable binding of U2 snRNP to the branchpoint sequence (BPS) in pre-mRNA. Directly contacts the pre-mRNA branch site adenosine for the first catalytic step of splicing. Enters the spliceosome and associates with the pre-mRNA branch site as part of the 17S U2 or, in the case of the minor spliceosome, as part of the 18S U11/U12 snRNP complex, and thus may facilitate the interaction of these snRNP with the branch sites of U2 and U12 respectively. This is Splicing factor 3B subunit 6 from Drosophila melanogaster (Fruit fly).